Here is a 121-residue protein sequence, read N- to C-terminus: Small ribosomal subunit protein uS13 (121 aa).

A disordered region spans residues 92–121 (RKGLPMRGQRTRTNARTRKGPRRAAQALKK).

This sequence belongs to the universal ribosomal protein uS13 family. As to quaternary structure, part of the 30S ribosomal subunit. Forms a loose heterodimer with protein S19. Forms two bridges to the 50S subunit in the 70S ribosome.

Located at the top of the head of the 30S subunit, it contacts several helices of the 16S rRNA. In the 70S ribosome it contacts the 23S rRNA (bridge B1a) and protein L5 of the 50S subunit (bridge B1b), connecting the 2 subunits; these bridges are implicated in subunit movement. Contacts the tRNAs in the A and P-sites. The polypeptide is Small ribosomal subunit protein uS13 (Burkholderia thailandensis (strain ATCC 700388 / DSM 13276 / CCUG 48851 / CIP 106301 / E264)).